The primary structure comprises 246 residues: Pyridoxine 5'-phosphate synthase (246 aa).

Asn-12 contributes to the 3-amino-2-oxopropyl phosphate binding site. 14–15 (DH) lines the 1-deoxy-D-xylulose 5-phosphate pocket. Arg-23 is a 3-amino-2-oxopropyl phosphate binding site. Residue His-48 is the Proton acceptor of the active site. 2 residues coordinate 1-deoxy-D-xylulose 5-phosphate: Arg-50 and His-55. Glu-75 acts as the Proton acceptor in catalysis. Thr-105 is a 1-deoxy-D-xylulose 5-phosphate binding site. His-196 acts as the Proton donor in catalysis. Residues Gly-197 and 218 to 219 (GH) contribute to the 3-amino-2-oxopropyl phosphate site.

This sequence belongs to the PNP synthase family. In terms of assembly, homooctamer; tetramer of dimers.

The protein resides in the cytoplasm. The enzyme catalyses 3-amino-2-oxopropyl phosphate + 1-deoxy-D-xylulose 5-phosphate = pyridoxine 5'-phosphate + phosphate + 2 H2O + H(+). The protein operates within cofactor biosynthesis; pyridoxine 5'-phosphate biosynthesis; pyridoxine 5'-phosphate from D-erythrose 4-phosphate: step 5/5. Functionally, catalyzes the complicated ring closure reaction between the two acyclic compounds 1-deoxy-D-xylulose-5-phosphate (DXP) and 3-amino-2-oxopropyl phosphate (1-amino-acetone-3-phosphate or AAP) to form pyridoxine 5'-phosphate (PNP) and inorganic phosphate. This is Pyridoxine 5'-phosphate synthase from Pseudomonas syringae pv. syringae (strain B728a).